The following is a 259-amino-acid chain: Mediator of RNA polymerase II transcription subunit 7 (259 aa).

3 disordered regions span residues 1-52, 99-118, and 223-242; these read MAEP…EWSP, TQLY…SSQP, and GSTI…EDQI. Over residues 31 to 44 the composition is skewed to basic and acidic residues; sequence ENIKKEASKGEDGR. Residues 230–242 show a composition bias toward basic and acidic residues; the sequence is TKDKKGVKPEDQI.

This sequence belongs to the Mediator complex subunit 7 family. As to quaternary structure, component of the Mediator complex.

It is found in the nucleus. In terms of biological role, component of the Mediator complex, a coactivator involved in the regulated transcription of nearly all RNA polymerase II-dependent genes. Mediator functions as a bridge to convey information from gene-specific regulatory proteins to the basal RNA polymerase II transcription machinery. Mediator is recruited to promoters by direct interactions with regulatory proteins and serves as a scaffold for the assembly of a functional preinitiation complex with RNA polymerase II and the general transcription factors. The protein is Mediator of RNA polymerase II transcription subunit 7 (med7) of Emericella nidulans (strain FGSC A4 / ATCC 38163 / CBS 112.46 / NRRL 194 / M139) (Aspergillus nidulans).